The following is a 573-amino-acid chain: 60 kDa heat shock protein, mitochondrial (573 aa).

The N-terminal 26 residues, 1 to 26, are a transit peptide targeting the mitochondrion; sequence MLRLPTVFRQMRPVSRVLAPHLTRAY. Position 31 is an N6-succinyllysine (Lys-31). Ser-67 and Ser-70 each carry phosphoserine. Lys-75 provides a ligand contact to ATP. Residue Lys-75 is modified to N6-acetyllysine. Position 82 is an N6-acetyllysine; alternate (Lys-82). N6-succinyllysine; alternate is present on Lys-82. An N6-acetyllysine modification is found at Lys-87. Tyr-90 carries the post-translational modification Phosphotyrosine. Lys-91 is subject to N6-acetyllysine. 111-115 is an ATP binding site; the sequence is DGTTT. At Lys-125 the chain carries N6-acetyllysine; alternate. Lys-125 is subject to N6-succinyllysine; alternate. Lys-130 is subject to N6-acetyllysine. N6-acetyllysine; alternate is present on Lys-133. Lys-133 carries the post-translational modification N6-succinyllysine; alternate. N6-malonyllysine; alternate is present on Lys-133. N6-acetyllysine is present on Lys-156. N6-acetyllysine; alternate is present on residues Lys-191, Lys-202, Lys-205, Lys-218, and Lys-236. 5 positions are modified to N6-succinyllysine; alternate: Lys-191, Lys-202, Lys-205, Lys-218, and Lys-236. An N6-acetyllysine modification is found at Lys-249. N6-acetyllysine; alternate is present on Lys-250. Lys-250 carries the post-translational modification N6-succinyllysine; alternate. Lys-269 and Lys-292 each carry N6-acetyllysine. Residue Lys-301 is modified to N6-succinyllysine. The residue at position 314 (Lys-314) is an N6-acetyllysine. Residue Lys-352 is modified to N6-acetyllysine; alternate. Lys-352 is subject to N6-succinyllysine; alternate. Lys-389 carries the post-translational modification N6-acetyllysine. Residue Lys-396 is modified to N6-acetyllysine; alternate. N6-succinyllysine; alternate is present on Lys-396. Ser-410 is modified (phosphoserine). Gly-440 lines the ATP pocket. Position 469 is an N6-acetyllysine (Lys-469). An N6-acetyllysine; alternate modification is found at Lys-481. N6-succinyllysine; alternate is present on Lys-481. Ser-488 carries the phosphoserine modification. Asp-520 contributes to the ATP binding site. Lys-551 is covalently cross-linked (Glycyl lysine isopeptide (Lys-Gly) (interchain with G-Cter in SUMO2)).

This sequence belongs to the chaperonin (HSP60) family. As to quaternary structure, homoheptamer arranged in a ring structure. The functional units of these chaperonins consist of heptameric rings of the large subunit Hsp60, which function as a back-to-back double ring. Interacts with 2 heptameric Hsp10 rings to form the symmetrical football complex. Interacts with HRAS. Interacts with ATAD3A. Interacts with ETFBKMT and EEF1AKMT3. Interacts with MFHAS1.

Its subcellular location is the mitochondrion matrix. It catalyses the reaction ATP + H2O + a folded polypeptide = ADP + phosphate + an unfolded polypeptide.. In terms of biological role, chaperonin implicated in mitochondrial protein import and macromolecular assembly. Together with Hsp10, facilitates the correct folding of imported proteins. May also prevent misfolding and promote the refolding and proper assembly of unfolded polypeptides generated under stress conditions in the mitochondrial matrix. The functional units of these chaperonins consist of heptameric rings of the large subunit Hsp60, which function as a back-to-back double ring. In a cyclic reaction, Hsp60 ring complexes bind one unfolded substrate protein per ring, followed by the binding of ATP and association with 2 heptameric rings of the co-chaperonin Hsp10. This leads to sequestration of the substrate protein in the inner cavity of Hsp60 where, for a certain period of time, it can fold undisturbed by other cell components. Synchronous hydrolysis of ATP in all Hsp60 subunits results in the dissociation of the chaperonin rings and the release of ADP and the folded substrate protein. The polypeptide is 60 kDa heat shock protein, mitochondrial (HSPD1) (Pongo abelii (Sumatran orangutan)).